Here is a 191-residue protein sequence, read N- to C-terminus: ATP-dependent dethiobiotin synthetase BioD 2 (191 aa).

13–18 (DVGKTI) serves as a coordination point for ATP. Position 17 (T17) interacts with Mg(2+). Residue K38 is part of the active site. T42 lines the substrate pocket. ATP-binding positions include D50 and 115–118 (EGAG). Mg(2+) is bound by residues D50 and E115.

It belongs to the dethiobiotin synthetase family. Homodimer. Requires Mg(2+) as cofactor.

The protein resides in the cytoplasm. It carries out the reaction (7R,8S)-7,8-diammoniononanoate + CO2 + ATP = (4R,5S)-dethiobiotin + ADP + phosphate + 3 H(+). It functions in the pathway cofactor biosynthesis; biotin biosynthesis; biotin from 7,8-diaminononanoate: step 1/2. Its function is as follows. Catalyzes a mechanistically unusual reaction, the ATP-dependent insertion of CO2 between the N7 and N8 nitrogen atoms of 7,8-diaminopelargonic acid (DAPA, also called 7,8-diammoniononanoate) to form a ureido ring. This Haemophilus influenzae (strain ATCC 51907 / DSM 11121 / KW20 / Rd) protein is ATP-dependent dethiobiotin synthetase BioD 2.